Consider the following 493-residue polypeptide: Trigger factor (493 aa).

A PPIase FKBP-type domain is found at Gly169 to Thr254. The tract at residues Glu439–Glu493 is disordered.

It belongs to the FKBP-type PPIase family. Tig subfamily.

The protein localises to the cytoplasm. It carries out the reaction [protein]-peptidylproline (omega=180) = [protein]-peptidylproline (omega=0). Functionally, involved in protein export. Acts as a chaperone by maintaining the newly synthesized protein in an open conformation. Functions as a peptidyl-prolyl cis-trans isomerase. The sequence is that of Trigger factor from Allorhizobium ampelinum (strain ATCC BAA-846 / DSM 112012 / S4) (Agrobacterium vitis (strain S4)).